Here is a 95-residue protein sequence, read N- to C-terminus: DASH complex subunit DAD3 (95 aa).

It belongs to the DASH complex DAD3 family. In terms of assembly, component of the DASH complex consisting of ASK1, DAD1, DAD2, DAD3, DAD4, DAM1, DUO1, HSK3, SPC19 and SPC34, with a stoichiometry of one copy of each subunit per complex. Multiple DASH complexes oligomerize to form a ring that encircles spindle microtubules and organizes the rod-like NDC80 complexes of the outer kinetochore. DASH complex oligomerization strengthens microtubule attachments. On cytoplasmic microtubules, DASH complexes appear to form patches instead of rings.

Its subcellular location is the chromosome. It localises to the centromere. The protein resides in the kinetochore. The protein localises to the cytoplasm. It is found in the cytoskeleton. Its subcellular location is the spindle. It localises to the nucleus. Component of the DASH complex that connects microtubules with kinetochores and couples microtubule depolymerisation to chromosome movement; it is involved in retrieving kinetochores to the spindle poles before their re-orientation on the spindle in early mitosis and allows microtubule depolymerization to pull chromosomes apart and resist detachment during anaphase. Kinetochores, consisting of a centromere-associated inner segment and a microtubule-contacting outer segment, play a crucial role in chromosome segregation by mediating the physical connection between centromeric DNA and microtubules. Kinetochores also serve as an input point for the spindle assembly checkpoint, which delays anaphase until all chromosomes have bioriented on the mitotic spindle. In Chaetomium thermophilum (strain DSM 1495 / CBS 144.50 / IMI 039719) (Thermochaetoides thermophila), this protein is DASH complex subunit DAD3.